A 163-amino-acid chain; its full sequence is UPF0478 protein SERP1299 (163 aa).

The chain crosses the membrane as a helical span at residues 7-27 (IAGIIAAIAFLILCIGIVVVL).

This sequence belongs to the UPF0478 family.

It localises to the cell membrane. The chain is UPF0478 protein SERP1299 from Staphylococcus epidermidis (strain ATCC 35984 / DSM 28319 / BCRC 17069 / CCUG 31568 / BM 3577 / RP62A).